The sequence spans 81 residues: 2,3-bisphosphoglycerate-independent phosphoglycerate mutase (81 aa).

Residue Ser-14 is the Phosphoserine intermediate of the active site. Ser-14 contributes to the Mn(2+) binding site. Position 75 (His-75) interacts with substrate.

It belongs to the BPG-independent phosphoglycerate mutase family. As to quaternary structure, monomer. The cofactor is Mn(2+).

The catalysed reaction is (2R)-2-phosphoglycerate = (2R)-3-phosphoglycerate. The protein operates within carbohydrate degradation; glycolysis; pyruvate from D-glyceraldehyde 3-phosphate: step 3/5. In terms of biological role, catalyzes the interconversion of 2-phosphoglycerate and 3-phosphoglycerate. The sequence is that of 2,3-bisphosphoglycerate-independent phosphoglycerate mutase (gpmI) from Tomato big bud phytoplasma.